The following is a 434-amino-acid chain: Enolase (434 aa).

Position 165 (glutamine 165) interacts with (2R)-2-phosphoglycerate. Residue glutamate 207 is the Proton donor of the active site. 3 residues coordinate Mg(2+): aspartate 244, glutamate 291, and aspartate 318. The (2R)-2-phosphoglycerate site is built by lysine 343, arginine 372, serine 373, and lysine 394. The active-site Proton acceptor is lysine 343.

It belongs to the enolase family. Mg(2+) is required as a cofactor.

The protein localises to the cytoplasm. It is found in the secreted. Its subcellular location is the cell surface. The enzyme catalyses (2R)-2-phosphoglycerate = phosphoenolpyruvate + H2O. It functions in the pathway carbohydrate degradation; glycolysis; pyruvate from D-glyceraldehyde 3-phosphate: step 4/5. Its function is as follows. Catalyzes the reversible conversion of 2-phosphoglycerate (2-PG) into phosphoenolpyruvate (PEP). It is essential for the degradation of carbohydrates via glycolysis. This is Enolase from Staphylococcus saprophyticus subsp. saprophyticus (strain ATCC 15305 / DSM 20229 / NCIMB 8711 / NCTC 7292 / S-41).